Reading from the N-terminus, the 329-residue chain is Protein PRY2 (329 aa).

The signal sequence occupies residues 1–18; that stretch reads MKFSKVSLLAASASVALS. The span at 122–131 shows a compositional bias: polar residues; sequence TSASATQDDV. The segment at 122 to 197 is disordered; it reads TSASATQDDV…SSSDFSTSMV (76 aa). Residues 132 to 190 show a composition bias toward low complexity; sequence TTTLTSSTQPTSTTTPTTTTTSPTTTTSPTTTASPTTTASPTTATTTQSTASSTQSSSS. The SCP domain occupies 197–311; sequence VNEHNTKRAL…EWGDYIICSY (115 aa).

This sequence belongs to the CRISP family. Post-translationally, O-glycosylated.

It localises to the secreted. Secreted protein required for efficient export of lipids such as acetylated sterols. Acts in detoxification of hydrophobic compounds. The chain is Protein PRY2 (PRY2) from Saccharomyces cerevisiae (strain ATCC 204508 / S288c) (Baker's yeast).